Here is a 185-residue protein sequence, read N- to C-terminus: Threonylcarbamoyl-AMP synthase (185 aa).

A YrdC-like domain is found at 7–185 (AAQRRAARAH…IDFASGRVLR (179 aa)).

The protein belongs to the SUA5 family. TsaC subfamily.

It is found in the cytoplasm. The enzyme catalyses L-threonine + hydrogencarbonate + ATP = L-threonylcarbamoyladenylate + diphosphate + H2O. In terms of biological role, required for the formation of a threonylcarbamoyl group on adenosine at position 37 (t(6)A37) in tRNAs that read codons beginning with adenine. Catalyzes the conversion of L-threonine, HCO(3)(-)/CO(2) and ATP to give threonylcarbamoyl-AMP (TC-AMP) as the acyladenylate intermediate, with the release of diphosphate. The protein is Threonylcarbamoyl-AMP synthase of Laribacter hongkongensis (strain HLHK9).